The chain runs to 200 residues: Recombination protein RecR (200 aa).

The C4-type zinc finger occupies 58-75; sequence CSNCFCLKISQTSPCNFC. The Toprim domain occupies 82 to 177; that stretch reads SSLCIVATPK…KISRLALGMP (96 aa).

Belongs to the RecR family.

Its function is as follows. May play a role in DNA repair. It seems to be involved in an RecBC-independent recombinational process of DNA repair. It may act with RecF and RecO. The sequence is that of Recombination protein RecR from Chlamydia trachomatis serovar D (strain ATCC VR-885 / DSM 19411 / UW-3/Cx).